A 165-amino-acid polypeptide reads, in one-letter code: uncharacterized protein (165 aa).

Positions Gln49–Lys165 are disordered. Positions Met94–Ser106 are enriched in polar residues. Over residues Thr120–Pro135 the composition is skewed to low complexity. Residues Ser139–Ala157 are compositionally biased toward polar residues.

This is an uncharacterized protein from Caenorhabditis elegans.